We begin with the raw amino-acid sequence, 184 residues long: Shikimate kinase (184 aa).

12-17 (GSGKST) contacts ATP. Ser16 contacts Mg(2+). Asp34, Arg58, and Gly80 together coordinate substrate. Arg117 is an ATP binding site. Arg136 lines the substrate pocket. Residue Arg153 coordinates ATP. The segment at 164-184 (SRLDDPTPNTSPSSTASGAAT) is disordered. Residues 169–184 (PTPNTSPSSTASGAAT) are compositionally biased toward low complexity.

This sequence belongs to the shikimate kinase family. As to quaternary structure, monomer. It depends on Mg(2+) as a cofactor.

The protein localises to the cytoplasm. The catalysed reaction is shikimate + ATP = 3-phosphoshikimate + ADP + H(+). Its pathway is metabolic intermediate biosynthesis; chorismate biosynthesis; chorismate from D-erythrose 4-phosphate and phosphoenolpyruvate: step 5/7. In terms of biological role, catalyzes the specific phosphorylation of the 3-hydroxyl group of shikimic acid using ATP as a cosubstrate. In Mycobacterium ulcerans (strain Agy99), this protein is Shikimate kinase.